The primary structure comprises 131 residues: MSWQAYVDEHLMCEIEGHHLTSAAIVGHDGAVWAQSTAFPQFKTEEMTNIMKDFDEPGFLAPTGLFLGPTKYMVIQGEPGAVIRGKKGSGGITVKKTGQALVIGIYDEPMTPGQCNMVVERLGDYLLEQGM.

A disulfide bridge links Cys-13 with Cys-115. Residues 81–97 carry the Involved in PIP2 interaction motif; sequence AVIRGKKGSGGITVKKT. Phosphothreonine is present on Thr-111.

The protein belongs to the profilin family. In terms of assembly, occurs in many kinds of cells as a complex with monomeric actin in a 1:1 ratio. Phosphorylated by MAP kinases.

It localises to the cytoplasm. The protein resides in the cytoskeleton. In terms of biological role, binds to actin and affects the structure of the cytoskeleton. At high concentrations, profilin prevents the polymerization of actin, whereas it enhances it at low concentrations. In Zea mays (Maize), this protein is Profilin-9.